The primary structure comprises 347 residues: FMRFamide-related peptides (347 aa).

The N-terminal stretch at Met-1–Ile-22 is a signal peptide. The propeptide occupies Ile-23 to Ala-102. A Phenylalanine amide modification is found at Phe-114. Tyr-146 bears the Tyrosine amide mark. Phe-157, Phe-168, Phe-179, Phe-190, Phe-201, Phe-212, Phe-223, and Phe-232 each carry phenylalanine amide. A propeptide spanning residues Ser-235–Leu-240 is cleaved from the precursor. Phe-250 and Phe-259 each carry phenylalanine amide. Ser-270 is subject to Serine amide. The residue at position 280 (Phe-280) is a Phenylalanine amide. Residues Ser-283 to Gln-347 constitute a propeptide that is removed on maturation. Residues Ser-283 to Gln-347 are disordered. Basic and acidic residues predominate over residues Ser-305–Leu-320. Residues Gln-321 to Gln-347 are compositionally biased toward polar residues.

This sequence belongs to the FARP (FMRFamide related peptide) family. Post-translationally, this precursor includes 13 peptides that have FMRF or related sequences at their C-termini, and other putative neuropeptides.

Its subcellular location is the secreted. In terms of biological role, in insects, FMRFamide and related peptides have modulatory actions at skeletal neuromuscular junctions, and peptides that are immunologically related to FMRFamide are released into the circulation from neurohemal organs. This is FMRFamide-related peptides from Drosophila melanogaster (Fruit fly).